The sequence spans 259 residues: Flagellar L-ring protein 1 (259 aa).

An N-terminal signal peptide occupies residues 1 to 15 (MKRICLLALITTMSG). Cys-16 carries N-palmitoyl cysteine lipidation. A lipid anchor (S-diacylglycerol cysteine) is attached at Cys-16. Residues 38–63 (EGDKSKDESSGIVDTLRGRNDPVAGD) form a disordered region.

The protein belongs to the FlgH family. In terms of assembly, the basal body constitutes a major portion of the flagellar organelle and consists of four rings (L,P,S, and M) mounted on a central rod.

It localises to the cell outer membrane. It is found in the bacterial flagellum basal body. Functionally, assembles around the rod to form the L-ring and probably protects the motor/basal body from shearing forces during rotation. The polypeptide is Flagellar L-ring protein 1 (flgH1) (Vibrio parahaemolyticus serotype O3:K6 (strain RIMD 2210633)).